We begin with the raw amino-acid sequence, 148 residues long: Ubiquitin-conjugating enzyme E2 29 (148 aa).

In terms of domain architecture, UBC core spans 1-147 (MATRRILKEL…ARSWTQKYAL (147 aa)). The active-site Glycyl thioester intermediate is the C85.

This sequence belongs to the ubiquitin-conjugating enzyme family.

The enzyme catalyses S-ubiquitinyl-[E1 ubiquitin-activating enzyme]-L-cysteine + [E2 ubiquitin-conjugating enzyme]-L-cysteine = [E1 ubiquitin-activating enzyme]-L-cysteine + S-ubiquitinyl-[E2 ubiquitin-conjugating enzyme]-L-cysteine.. It functions in the pathway protein modification; protein ubiquitination. Accepts the ubiquitin from the E1 complex and catalyzes its covalent attachment to other proteins. The protein is Ubiquitin-conjugating enzyme E2 29 (UBC29) of Arabidopsis thaliana (Mouse-ear cress).